Here is a 561-residue protein sequence, read N- to C-terminus: Arginine--tRNA ligase (561 aa).

Residues A128–H138 carry the 'HIGH' region motif.

It belongs to the class-I aminoacyl-tRNA synthetase family. As to quaternary structure, monomer.

It localises to the cytoplasm. It catalyses the reaction tRNA(Arg) + L-arginine + ATP = L-arginyl-tRNA(Arg) + AMP + diphosphate. This chain is Arginine--tRNA ligase, found in Chromohalobacter salexigens (strain ATCC BAA-138 / DSM 3043 / CIP 106854 / NCIMB 13768 / 1H11).